The primary structure comprises 147 residues: MIRRPPLSLLDLEAAPLGSRWALTAVLDALPWNSDGLIAAIAQQHDSGEVLMLAWMNRQALGETLASGQACYWSRSRRCLWRKGESSGHRQRLIEARLDCDGDAVLLLVDQQGPACHTGRPNCFYNAIRDGAVEVISSPLKDSRHDS.

D99 provides a ligand contact to Mg(2+). A Zn(2+)-binding site is contributed by C100. Mg(2+) is bound by residues D101 and D103. Residues C116 and C123 each contribute to the Zn(2+) site.

Belongs to the PRA-CH family. As to quaternary structure, homodimer. Requires Mg(2+) as cofactor. Zn(2+) is required as a cofactor.

Its subcellular location is the cytoplasm. It carries out the reaction 1-(5-phospho-beta-D-ribosyl)-5'-AMP + H2O = 1-(5-phospho-beta-D-ribosyl)-5-[(5-phospho-beta-D-ribosylamino)methylideneamino]imidazole-4-carboxamide. It participates in amino-acid biosynthesis; L-histidine biosynthesis; L-histidine from 5-phospho-alpha-D-ribose 1-diphosphate: step 3/9. Its function is as follows. Catalyzes the hydrolysis of the adenine ring of phosphoribosyl-AMP. The protein is Phosphoribosyl-AMP cyclohydrolase 2 of Pseudomonas fluorescens (strain ATCC BAA-477 / NRRL B-23932 / Pf-5).